The following is a 393-amino-acid chain: Chorismate synthase (393 aa).

NADP(+) contacts are provided by Arg40 and Arg46. Residues 129–131 (RSS), 249–250 (QA), Gly301, 316–320 (KPIPT), and Arg342 each bind FMN.

The protein belongs to the chorismate synthase family. Homotetramer. FMNH2 is required as a cofactor.

The catalysed reaction is 5-O-(1-carboxyvinyl)-3-phosphoshikimate = chorismate + phosphate. It functions in the pathway metabolic intermediate biosynthesis; chorismate biosynthesis; chorismate from D-erythrose 4-phosphate and phosphoenolpyruvate: step 7/7. Functionally, catalyzes the anti-1,4-elimination of the C-3 phosphate and the C-6 proR hydrogen from 5-enolpyruvylshikimate-3-phosphate (EPSP) to yield chorismate, which is the branch point compound that serves as the starting substrate for the three terminal pathways of aromatic amino acid biosynthesis. This reaction introduces a second double bond into the aromatic ring system. The sequence is that of Chorismate synthase from Geobacter metallireducens (strain ATCC 53774 / DSM 7210 / GS-15).